Reading from the N-terminus, the 288-residue chain is UTP--glucose-1-phosphate uridylyltransferase (288 aa).

It belongs to the UDPGP type 2 family.

The enzyme catalyses alpha-D-glucose 1-phosphate + UTP + H(+) = UDP-alpha-D-glucose + diphosphate. Its pathway is glycolipid metabolism; diglucosyl-diacylglycerol biosynthesis. Its function is as follows. Catalyzes the formation of UDP-glucose from glucose-1-phosphate and UTP. This is an intermediate step in the biosynthesis of diglucosyl-diacylglycerol (Glc2-DAG), i.e. a glycolipid found in the membrane, which is also used as a membrane anchor for lipoteichoic acid (LTA). This Staphylococcus epidermidis (strain ATCC 35984 / DSM 28319 / BCRC 17069 / CCUG 31568 / BM 3577 / RP62A) protein is UTP--glucose-1-phosphate uridylyltransferase (gtaB).